The following is a 461-amino-acid chain: MPLLILLMLLAAGAAGAESATPSLHIGVNYGANADNLPSPTSVATFLATKTTIDRVKLFDANPTFISAFAGTPISLAVSLPNSALPALADKATGLDAARSWIRANLSPYVPATNVTLLLAGNEILLSTDTNLILSLLPAMRRLAQALKAEGLTGVRVTTPHYLGILAPSDGIPSNASFRAGYNTKLFPAMLQFHRDTGSPFMVNPYPYFSYRPETLNYALFRPNSGIYDPATKLNYTSMLDAQMDAIYTAMKKLGYGDVDIAVGEAGWPTQAEPGQIGVGVQEARDFNEGMIRVCSSGKGTPLMPNRTFETYLFSLFDENQKPGPIAERHFGLFNPDFTPVYDLGLLRDGASVAPTPSPNPSPNPSPKPAPSGGGKWCVAKDGANGTDLQNNINYACGFVDCKPIQSGGACFSPNSLQAHASYVMNAYYQANGHTDLACDFKGTGIVTSSDPSYGGCKYVS.

An N-terminal signal peptide occupies residues 1–23 (MPLLILLMLLAAGAAGAESATPS). Glu123 serves as the catalytic Proton donor. The active-site Nucleophile is the Glu265. The interval 350 to 375 (GASVAPTPSPNPSPNPSPKPAPSGGG) is disordered. The span at 356-370 (TPSPNPSPNPSPKPA) shows a compositional bias: pro residues. Cys378 and Cys439 form a disulfide bridge.

This sequence belongs to the glycosyl hydrolase 17 family. In terms of processing, contains two additional disulfide bonds.

The enzyme catalyses Hydrolysis of (1-&gt;3)-beta-D-glucosidic linkages in (1-&gt;3)-beta-D-glucans.. In terms of biological role, is thought to be an important plant defense-related product against fungal pathogens. The polypeptide is Glucan endo-1,3-beta-glucosidase (GLC1) (Triticum aestivum (Wheat)).